The primary structure comprises 105 residues: Urease subunit beta (105 aa).

It belongs to the urease beta subunit family. In terms of assembly, heterotrimer of UreA (gamma), UreB (beta) and UreC (alpha) subunits. Three heterotrimers associate to form the active enzyme.

It is found in the cytoplasm. The enzyme catalyses urea + 2 H2O + H(+) = hydrogencarbonate + 2 NH4(+). It participates in nitrogen metabolism; urea degradation; CO(2) and NH(3) from urea (urease route): step 1/1. The polypeptide is Urease subunit beta (Pseudomonas entomophila (strain L48)).